A 664-amino-acid polypeptide reads, in one-letter code: Pentatricopeptide repeat-containing protein At1g10910, chloroplastic (664 aa).

The N-terminal 72 residues, 1 to 72 (METPLLVGLE…KRHSNSYLAR (72 aa)), are a transit peptide targeting the chloroplast. PPR repeat units lie at residues 165 to 199 (NVYICNSILSCLVKNGKLDSCIKLFDQMKRDGLKP), 200 to 235 (DVVTYNTLLAGCIKVKNGYPKAIELIGELPHNGIQM), 236 to 270 (DSVMYGTVLAICASNGRSEEAENFIQQMKVEGHSP), 271 to 305 (NIYHYSSLLNSYSWKGDYKKADELMTEMKSIGLVP), 306 to 340 (NKVMMTTLLKVYIKGGLFDRSRELLSELESAGYAE), 341 to 375 (NEMPYCMLMDGLSKAGKLEEARSIFDDMKGKGVRS), 376 to 406 (DGYANSIMISALCRSKRFKEAKELSRDSETT), 411 to 445 (DLVMLNTMLCAYCRAGEMESVMRMMKKMDEQAVSP), and 446 to 480 (DYNTFHILIKYFIKEKLHLLAYQTTLDMHSKGHRL).

The protein belongs to the PPR family. P subfamily.

The protein localises to the plastid. It is found in the chloroplast. This chain is Pentatricopeptide repeat-containing protein At1g10910, chloroplastic, found in Arabidopsis thaliana (Mouse-ear cress).